Consider the following 855-residue polypeptide: DNA polymerase (855 aa).

Positions 107-332 (KPEMKPVFDA…LHNFFLPKIE (226 aa)) constitute a 3'-5' exonuclease domain. The polymerase stretch occupies residues 333-833 (KNEKLCSLYY…MDKEHPDHSK (501 aa)).

This sequence belongs to the DNA polymerase type-A family. Single-chain monomer with multiple functions.

The enzyme catalyses DNA(n) + a 2'-deoxyribonucleoside 5'-triphosphate = DNA(n+1) + diphosphate. Its function is as follows. Replicates the viral genomic DNA. This polymerase possesses two enzymatic activities: DNA synthesis (polymerase) and an exonucleolytic activity that degrades single-stranded DNA in the 3'-5' direction for proofreading purpose. The DNA synthesis very likely occurs by strand displacement. This chain is DNA polymerase, found in Escherichia phage T5 (Enterobacteria phage T5).